A 617-amino-acid polypeptide reads, in one-letter code: Proline--tRNA ligase (617 aa).

Belongs to the class-II aminoacyl-tRNA synthetase family. ProS type 1 subfamily. As to quaternary structure, homodimer.

Its subcellular location is the cytoplasm. The enzyme catalyses tRNA(Pro) + L-proline + ATP = L-prolyl-tRNA(Pro) + AMP + diphosphate. Catalyzes the attachment of proline to tRNA(Pro) in a two-step reaction: proline is first activated by ATP to form Pro-AMP and then transferred to the acceptor end of tRNA(Pro). As ProRS can inadvertently accommodate and process non-cognate amino acids such as alanine and cysteine, to avoid such errors it has two additional distinct editing activities against alanine. One activity is designated as 'pretransfer' editing and involves the tRNA(Pro)-independent hydrolysis of activated Ala-AMP. The other activity is designated 'posttransfer' editing and involves deacylation of mischarged Ala-tRNA(Pro). The misacylated Cys-tRNA(Pro) is not edited by ProRS. The sequence is that of Proline--tRNA ligase from Streptococcus pneumoniae (strain P1031).